Here is a 533-residue protein sequence, read N- to C-terminus: Thromboxane-A synthase (533 aa).

Residues 1–10 are Cytoplasmic-facing; it reads MEALGFLKLE. A helical membrane pass occupies residues 11 to 31; it reads VNGPMVTVALSVALLALLKWY. The Lumenal segment spans residues 32–75; that stretch reads STSAFSRLEKLGLRHPKPSPFIGNLMFFRQGFWESQMELRKLYG. The helical transmembrane segment at 76–96 threads the bilayer; it reads PLCGYYLGRRMFIVISEPDMI. Residues 97-223 are Cytoplasmic-facing; that stretch reads KQVLVENFSN…KRFFEFCIPR (127 aa). A helical membrane pass occupies residues 224-244; sequence PILVLLLSFPSIMVPLARILP. At 245–335 the chain is on the lumenal side; sequence NKNRDELNGF…LTVDEIVGQA (91 aa). A helical transmembrane segment spans residues 336-356; the sequence is FIFLIAGYEIVTNTLSFATYL. Over 357–533 the chain is Cytoplasmic; the sequence is LATNPDCQEK…NGVYIKIVSR (177 aa). Cysteine 479 is a binding site for heme.

This sequence belongs to the cytochrome P450 family. In terms of assembly, monomer. The cofactor is heme.

Its subcellular location is the endoplasmic reticulum membrane. It catalyses the reaction prostaglandin H2 = thromboxane A2. The catalysed reaction is prostaglandin H2 = (12S)-hydroxy-(5Z,8E,10E)-heptadecatrienoate + malonaldehyde. The enzyme catalyses a hydroperoxyeicosatetraenoate = an oxoeicosatetraenoate + H2O. It carries out the reaction (15S)-hydroperoxy-(5Z,8Z,11Z,13E)-eicosatetraenoate = 15-oxo-(5Z,8Z,11Z,13E)-eicosatetraenoate + H2O. It catalyses the reaction (15S)-hydroperoxy-(5Z,8Z,11Z,13E)-eicosatetraenoate + AH2 = (15S)-hydroxy-(5Z,8Z,11Z,13E)-eicosatetraenoate + A + H2O. Catalyzes the conversion of prostaglandin H2 (PGH2) to thromboxane A2 (TXA2), a potent inducer of blood vessel constriction and platelet aggregation. Also cleaves PGH2 to 12-hydroxy-heptadecatrienoicacid (12-HHT) and malondialdehyde, which is known to act as a mediator of DNA damage. 12-HHT and malondialdehyde are formed stoichiometrically in the same amounts as TXA2. Additionally, displays dehydratase activity, toward (15S)-hydroperoxy-(5Z,8Z,11Z,13E)-eicosatetraenoate (15(S)-HPETE) producing 15-KETE and 15-HETE. The chain is Thromboxane-A synthase (TBXAS1) from Macaca fascicularis (Crab-eating macaque).